Here is a 362-residue protein sequence, read N- to C-terminus: sn-glycerol-3-phosphate import ATP-binding protein UgpC (362 aa).

The 232-residue stretch at L4–I235 folds into the ABC transporter domain. An ATP-binding site is contributed by G37–S44.

It belongs to the ABC transporter superfamily. sn-glycerol-3-phosphate importer (TC 3.A.1.1.3) family. The complex is composed of two ATP-binding proteins (UgpC), two transmembrane proteins (UgpA and UgpE) and a solute-binding protein (UgpB).

It is found in the cell inner membrane. The enzyme catalyses sn-glycerol 3-phosphate(out) + ATP + H2O = sn-glycerol 3-phosphate(in) + ADP + phosphate + H(+). In terms of biological role, part of the ABC transporter complex UgpBAEC involved in sn-glycerol-3-phosphate (G3P) import. Responsible for energy coupling to the transport system. The polypeptide is sn-glycerol-3-phosphate import ATP-binding protein UgpC (Bordetella parapertussis (strain 12822 / ATCC BAA-587 / NCTC 13253)).